Reading from the N-terminus, the 149-residue chain is Cytochrome c-type biogenesis protein CcmE (149 aa).

At 1 to 7 (MKKRHQR) the chain is on the cytoplasmic side. The chain crosses the membrane as a helical; Signal-anchor for type II membrane protein span at residues 8-28 (LFLVLGVVAGVSVATALVLNA). Over 29 to 149 (FRDNMTFFIT…EHSVDEVGDY (121 aa)) the chain is Periplasmic. The heme site is built by histidine 123 and tyrosine 127.

The protein belongs to the CcmE/CycJ family.

The protein resides in the cell inner membrane. Functionally, heme chaperone required for the biogenesis of c-type cytochromes. Transiently binds heme delivered by CcmC and transfers the heme to apo-cytochromes in a process facilitated by CcmF and CcmH. The polypeptide is Cytochrome c-type biogenesis protein CcmE (Halorhodospira halophila (strain DSM 244 / SL1) (Ectothiorhodospira halophila (strain DSM 244 / SL1))).